A 1103-amino-acid chain; its full sequence is Ataxin-2 homolog (1103 aa).

Residues 1 to 10 show a composition bias toward basic residues; that stretch reads MSQSKDKKKF. The segment at 1-75 is disordered; it reads MSQSKDKKKF…QQQQQQQQPF (75 aa). Gly residues predominate over residues 11–28; it reads VGGGGGGGGNNSGGGGYG. 2 stretches are compositionally biased toward low complexity: residues 33 to 44 and 56 to 73; these read NNNNNNRNSSNN and HHQQQQQQQQQQQQQQQQ. In terms of domain architecture, Sm spans 84–166; it reads RTVFMSMSLV…FLQITATGVV (83 aa). The stretch at 258–287 forms a coiled coil; it reads EFYKINQSVAEKKAQEIENEKSGNIHLLEE. 5 disordered regions span residues 305 to 474, 516 to 557, 615 to 763, 901 to 920, and 930 to 1103; these read VVRK…RESP, TNKS…APKS, LVIK…NNTT, HTMKPPGSLQPGGGGVVQPQ, and QPQG…NQYH. Positions 312 to 356 are enriched in low complexity; the sequence is PTSTTSTTTSPPTQNPTPSSSVYIPPSKRNNNNNTPSTPSVTSPP. A compositionally biased stretch (basic and acidic residues) spans 358-371; the sequence is VDKKHQQTHQDKKQ. A coiled-coil region spans residues 366–403; it reads HQDKKQTQQQQQQQQQQQQQQQQQQQQQQQQQQQQQTQ. A compositionally biased stretch (low complexity) spans 372 to 463; that stretch reads TQQQQQQQQQ…NNTPTATNTN (92 aa). The segment covering 516-529 has biased composition (polar residues); it reads TNKSMNKSGSNIST. 3 stretches are compositionally biased toward low complexity: residues 530-544, 637-676, and 683-694; these read TPVNGSGNVGPNGTP, PTQLSLSGSSTSTNTSTTSPPTTNTTTTTTTATNSTTPST, and TTTPITTTILTE. Residues 691 to 730 are a coiled coil; it reads ILTENKSDDKEKEKEKEKEKVDEKEKEKEKEKSDEKDKDQ. The span at 695–741 shows a compositional bias: basic and acidic residues; it reads NKSDDKEKEKEKEKEKVDEKEKEKEKEKSDEKDKDQSSTLVEKKDES. The span at 742-763 shows a compositional bias: low complexity; it reads SSSSNTTTTTTNTTNNNNNNTT. The span at 930 to 957 shows a compositional bias: low complexity; sequence QPQGGVVQPSAGGAPKTMYQQQQQQQQQ. A compositionally biased stretch (gly residues) spans 960 to 969; sequence QPGGPMGVQR. The segment covering 974–984 has biased composition (low complexity); it reads PPQQQPQQQQQ. Pro residues predominate over residues 1020 to 1031; sequence YAVPHPQYPMPP. The span at 1062–1076 shows a compositional bias: low complexity; that stretch reads QVVSQNSPQQDSPSN.

It belongs to the ataxin-2 family.

The polypeptide is Ataxin-2 homolog (atxn2) (Dictyostelium discoideum (Social amoeba)).